The primary structure comprises 373 residues: NADPH-dependent 3-keto-steroid reductase HSD3B3 (373 aa).

NADP(+)-binding positions include G10–L15, Y155, and K159. K159 functions as the Proton donor in the catalytic mechanism. A helical membrane pass occupies residues V288 to V308.

The protein belongs to the 3-beta-HSD family. As to expression, high levels in adrenal gland, kidney and male liver (at protein level). Low levels in female liver (at protein level). Expressed in ovaries (at protein level).

It is found in the endoplasmic reticulum membrane. The protein localises to the mitochondrion membrane. It catalyses the reaction a 3beta-hydroxysteroid + NADP(+) = a 3-oxosteroid + NADPH + H(+). The catalysed reaction is 5alpha-androstane-3beta,17beta-diol + NADP(+) = 17beta-hydroxy-5alpha-androstan-3-one + NADPH + H(+). It functions in the pathway steroid metabolism. Responsible for the reduction of the oxo group on the C-3 of 5alpha-androstane steroids. Catalyzes the conversion of dihydrotestosterone to its inactive form 5alpha-androstanediol, that does not bind androgen receptor/AR. Does not function as an isomerase. The polypeptide is NADPH-dependent 3-keto-steroid reductase HSD3B3 (HSD3B3) (Mesocricetus auratus (Golden hamster)).